Reading from the N-terminus, the 1260-residue chain is MLQQFTLLFLYLSIASAKTITGVFDSFNSLTWSNAANYAFKGPGYPTWNAVLGWSLDGTSANPGDTFTLNMPCVFKYTTSQTSVDLTADGVKYATCQFYSGEEFTTFSTLTCTVNDALKSSIKAFGTVTLPIAFNVGGTGSSTDLEDSKCFTAGTNTVTFNDGDKDISIDVEFEKSTVDPSAYLYASRVMPSLNKVTTLFVAPQCENGYTSGTMGFSSSNGDVAIDCSNIHIGITKGLNDWNYPVSSESFSYTKTCTSNGIQIKYQNVPAGYRPFIDAYISATDVNQYTLAYTNDYTCAGSRSQSKPFTLRWTGYKNSDAGSNGIVIVATTRTVTDSTTAVTTLPFNPSVDKTKTIEILQPIPTTTITTSYVGVTTSYSTKTAPIGETATVIVDVPYHTTTTVTSEWTGTITTTTTRTNPTDSIDTVVVQVPSPNPTVSTTEYWSQSFATTTTVTAPPGGTDTVIIREPPNHTVTTTEYWSQSFATTTTVTAPPGGTDSVIIREPPNPTVTTTEYWSQSFATTTTVTAPPGGTDSVIIREPPNPTVTTTEYWSQSYATTTTVTAPPGGTDSVIIREPPNHTVTTTEYWSQSYATTTTVTAPPGGTDTVIIREPPNHTVTTTEYWSQSFATTTTVTGPPSGTDTVIIREPPNPTVTTTEYWSQSYATTTTITAPPGETDTVLIREPPNHTVTTTEYWSQSYATTTTVTAPPGETDTVLIREPPNHTVTTTEYWSQSYATTTTVTAPPGGTDTVIIREPPNPTVTTTEYWSQSFATTTTVTAPPGGTDTVIIYESMSSSKISTSSNDITSIIPSFSRPHYVNSTTSDLSTFESSSMNTPTSISSDGMLLSSTTLVTESETTTESICSDGKECSRLSSSSGIVTNPDSNESSIVTSTVPTASTMSDSLSSTDGISATSSDNVSKSGVSVTTETSVTTIQTTPNPLSSSVTSLTQLSSIPSVSESESKVTFTSNGDNQSGTHDSQSTSTEIEIVTTSSTKVLPPVVSSNTDLTSEPTNTREQPTTLSTTSNSITEDITTSQPTGDNGDNTSSTNPVPTVATSTLASASEEDNKSGSHESASTSLKPSMGENSGLTTSTEIEATTTSPTEAPSPAVSSGTDVTTEPTDTREQPTTLSTTSKTNSESVATTQATNENGGKSPSTDLTSSLTTGTSASTSANSELVTSGSVTGGAVASASNDQSHSTSVTNSNSIVSNTPQTTLSQQVTSSSPSTNTFIASTYDGSGSIIQHSTWLYGLITLLSLFI.

The first 17 residues, 1–17, serve as a signal peptide directing secretion; that stretch reads MLQQFTLLFLYLSIASA. Disulfide bonds link Cys73-Cys150, Cys96-Cys112, Cys205-Cys298, and Cys227-Cys256. 10 repeat units span residues 433 to 468, 469 to 504, 505 to 540, 541 to 576, 577 to 612, 613 to 648, 649 to 684, 685 to 720, 721 to 756, and 757 to 792. Positions 433–792 are 10 X 36 AA tandem repeats; sequence SPNPTVSTTE…GGTDTVIIYE (360 aa). Residue Asn471 is glycosylated (N-linked (GlcNAc...) asparagine). Asn579 and Asn615 each carry an N-linked (GlcNAc...) asparagine glycan. 2 N-linked (GlcNAc...) asparagine glycosylation sites follow: Asn687 and Asn723. Residues Asn820, Asn886, Asn918, and Asn973 are each glycosylated (N-linked (GlcNAc...) asparagine). Composition is skewed to polar residues over residues 896–918 and 964–979; these read PTAS…SSDN and KVTF…GTHD. Disordered regions lie at residues 896–924 and 954–1226; these read PTAS…KSGV and SIPS…SSSP. A compositionally biased stretch (low complexity) spans 980-995; sequence SQSTSTEIEIVTTSST. A 2-1 repeat occupies 983-1043; it reads TSTEIEIVTT…TTSQPTGDNG (61 aa). The segment at 983–1152 is 2 X 26 AA approximate repeats; the sequence is TSTEIEIVTT…ATTQATNENG (170 aa). The span at 1002–1062 shows a compositional bias: polar residues; it reads VSSNTDLTSE…PTVATSTLAS (61 aa). 2 N-linked (GlcNAc...) asparagine glycosylation sites follow: Asn1045 and Asn1068. Positions 1073–1090 are enriched in polar residues; that stretch reads HESASTSLKPSMGENSGL. The span at 1091 to 1110 shows a compositional bias: low complexity; the sequence is TTSTEIEATTTSPTEAPSPA. One copy of the 2-2 repeat lies at 1092-1152; it reads TSTEIEATTT…ATTQATNENG (61 aa). Residues 1111 to 1154 are compositionally biased toward polar residues; it reads VSSGTDVTTEPTDTREQPTTLSTTSKTNSESVATTQATNENGGK. Composition is skewed to low complexity over residues 1155–1176 and 1197–1226; these read SPST…SANS and SHST…SSSP.

It belongs to the ALS family. In terms of processing, N-glycosylated and O-glycosylated. The GPI-anchor is attached to the protein in the endoplasmic reticulum and serves to target the protein to the cell surface. There, the glucosamine-inositol phospholipid moiety is cleaved off and the GPI-modified mannoprotein is covalently attached via its lipidless GPI glycan remnant to the 1,6-beta-glucan of the outer cell wall layer.

It localises to the cell membrane. Its subcellular location is the secreted. The protein localises to the cell wall. Its function is as follows. Major cell surface adhesion protein which mediates both yeast-to-host tissue adherence and yeast aggregation. Acts as a downstream effector of the EFG1 regulatory pathway. Required for rapamycin-induced aggregation of C.albicans. Binds glycans and mediates adherence to endothelial and epithelial cells, thereby playing an important role in the pathogenesis of C.albicans infections. The polypeptide is Agglutinin-like protein 1 (ALS1) (Candida albicans (Yeast)).